The sequence spans 489 residues: Ulvan Lyase-PL25 (489 aa).

The signal sequence occupies residues 1-31; sequence MNLNKTLRKNSPSGYKALLTFSIICGLMATG. Residue Cys-32 is the site of N-palmitoyl cysteine attachment. Cys-32 carries the S-diacylglycerol cysteine lipid modification. Residues Asn-60 and Asn-122 each coordinate substrate. The Proton donor role is filled by His-123. Substrate is bound by residues Lys-125 and His-143. The active-site Proton acceptor is the Tyr-188. Positions 204, 208, and 246 each coordinate substrate. Zn(2+) is bound at residue His-208. Residues His-264, Cys-266, and His-278 each contribute to the Zn(2+) site. Residue His-278 coordinates substrate.

Belongs to the polysaccharide lyase 25 family.

Its subcellular location is the cell membrane. Its function is as follows. Ulvan lyase involved in ulvan degradation. Ulvan is the main polysaccharide component of the Ulvales (green seaweed) cell wall. It is composed of disaccharide building blocks comprising 3-sulfated rhamnose (Rha3S) linked to D-glucuronic acid (GlcA), L-iduronic acid (IduA), or D-xylose (Xyl). Ulvan lyase catalyzes the endolytic cleavage of the glycosidic bond between Rha3S and the uronic acids GlcA or IduA, producing oligosaccharides that have unsaturated 4-deoxy-L-threo-hex-4-enopyranosiduronic acid (deltaUA) at the non-reducing end. This results eventually in the degradation of the ulvan polysaccharide into deltaUA-Rha3S disaccharides and deltaUA-Rha3S-Xyl-Rha3S tetrasaccharides. The polypeptide is Ulvan Lyase-PL25 (Pseudoalteromonas sp. (strain PLSV)).